The following is a 1372-amino-acid chain: DNA-directed RNA polymerase subunit beta'' (1372 aa).

Cys-252, Cys-321, Cys-328, and Cys-331 together coordinate Zn(2+).

It belongs to the RNA polymerase beta' chain family. RpoC2 subfamily. As to quaternary structure, in plastids the minimal PEP RNA polymerase catalytic core is composed of four subunits: alpha, beta, beta', and beta''. When a (nuclear-encoded) sigma factor is associated with the core the holoenzyme is formed, which can initiate transcription. Zn(2+) serves as cofactor.

The protein resides in the plastid. It is found in the organellar chromatophore. It carries out the reaction RNA(n) + a ribonucleoside 5'-triphosphate = RNA(n+1) + diphosphate. Functionally, DNA-dependent RNA polymerase catalyzes the transcription of DNA into RNA using the four ribonucleoside triphosphates as substrates. In Paulinella chromatophora, this protein is DNA-directed RNA polymerase subunit beta''.